Consider the following 181-residue polypeptide: Large ribosomal subunit protein uL5 (181 aa).

The protein belongs to the universal ribosomal protein uL5 family. Part of the 50S ribosomal subunit; part of the 5S rRNA/L5/L18/L25 subcomplex. Contacts the 5S rRNA and the P site tRNA. Forms a bridge to the 30S subunit in the 70S ribosome.

In terms of biological role, this is one of the proteins that bind and probably mediate the attachment of the 5S RNA into the large ribosomal subunit, where it forms part of the central protuberance. In the 70S ribosome it contacts protein S13 of the 30S subunit (bridge B1b), connecting the 2 subunits; this bridge is implicated in subunit movement. Contacts the P site tRNA; the 5S rRNA and some of its associated proteins might help stabilize positioning of ribosome-bound tRNAs. The chain is Large ribosomal subunit protein uL5 from Baumannia cicadellinicola subsp. Homalodisca coagulata.